We begin with the raw amino-acid sequence, 141 residues long: HTH-type transcriptional repressor NsrR (141 aa).

One can recognise an HTH rrf2-type domain in the interval 2-129; the sequence is QLTNFTDFGL…DQHTIQDMLT (128 aa). The segment at residues 28-51 is a DNA-binding region (H-T-H motif); it reads ITVVTETFDVSRNHMVKIINKLGQ. [2Fe-2S] cluster-binding residues include Cys91, Cys96, and Cys102.

It depends on [2Fe-2S] cluster as a cofactor.

Nitric oxide-sensitive repressor of genes involved in protecting the cell against nitrosative stress. May require iron for activity. The chain is HTH-type transcriptional repressor NsrR from Aliivibrio salmonicida (strain LFI1238) (Vibrio salmonicida (strain LFI1238)).